Here is a 394-residue protein sequence, read N- to C-terminus: Ceramide synthase 4 (394 aa).

The Lumenal portion of the chain corresponds to 1-31 (MLSSFNEWFWQDRFWLPPNVTWTELEDRDGR). The N-linked (GlcNAc...) asparagine glycan is linked to N19. A helical transmembrane segment spans residues 32–52 (VYPHPQDLLAALPLALVLLAM). The interval 67–128 (WLGVRDQTRR…RRRRNQDRPQ (62 aa)) is homeobox-like. The 202-residue stretch at 131–332 (KKFCEASWRF…ILRMLYSFMK (202 aa)) folds into the TLC domain. 4 helical membrane-spanning segments follow: residues 140–160 (FLFYLSSFVGGLSVLYHESWL), 179–199 (LYWWYLLELGFYLSLLIRLPF), 209–229 (QVIHHFVAVILMTFSYSANLL), and 260–280 (VCDALFLIFSFVFFYTRLVLF). Positions 291-301 (ESISNRGPFFG) match the Last loop motif motif. The helical transmembrane segment at 304–324 (FFNGLLMLLQLLHVFWSCLIL) threads the bilayer. Topologically, residues 325-394 (RMLYSFMKKG…RLTNRHTTAT (70 aa)) are cytoplasmic. The interval 341–394 (RSDVEESDSSEEAAAAQEPLQLKNGAAGGPRPAPTDGPRSRVAGRLTNRHTTAT) is disordered. S342, S349, and S350 each carry phosphoserine.

Post-translationally, phosphorylated at the C-terminus by CK2. N-glycosylated.

It is found in the endoplasmic reticulum membrane. It carries out the reaction sphinganine + octadecanoyl-CoA = N-(octadecanoyl)-sphinganine + CoA + H(+). The catalysed reaction is eicosanoyl-CoA + sphinganine = N-eicosanoylsphinganine + CoA + H(+). The enzyme catalyses docosanoyl-CoA + sphinganine = N-docosanoylsphinganine + CoA + H(+). It catalyses the reaction tetracosanoyl-CoA + sphinganine = N-tetracosanoylsphinganine + CoA + H(+). It carries out the reaction hexacosanoyl-CoA + sphinganine = N-hexacosanoylsphinganine + CoA + H(+). The catalysed reaction is a fatty acyl-CoA + sphing-4-enine = an N-acylsphing-4-enine + CoA + H(+). The enzyme catalyses sphing-4-enine + octadecanoyl-CoA = N-octadecanoylsphing-4-enine + CoA + H(+). It catalyses the reaction hexadecasphinganine + octadecanoyl-CoA = N-octadecanoylhexadecasphinganine + CoA + H(+). Its pathway is lipid metabolism; sphingolipid metabolism. Its function is as follows. Ceramide synthase that catalyzes formation of ceramide from sphinganine and acyl-CoA substrates, with high selectivity toward long and very-long chains (C18:0-C22:0) as acyl donor. This is Ceramide synthase 4 from Homo sapiens (Human).